We begin with the raw amino-acid sequence, 285 residues long: Inositol monophosphatase 1 (285 aa).

4 residues coordinate Mg(2+): Glu-73, Asp-93, Ile-95, and Asp-96. Glu-73 contacts substrate. Substrate is bound by residues 95 to 98 (IDGT), 198 to 200 (GTA), Glu-217, and Asp-224. Asp-224 contacts Mg(2+).

This sequence belongs to the inositol monophosphatase superfamily. In terms of assembly, homodimer. Requires Mg(2+) as cofactor.

Its subcellular location is the cytoplasm. It carries out the reaction a myo-inositol phosphate + H2O = myo-inositol + phosphate. It catalyses the reaction 1D-myo-inositol 1-phosphate + H2O = myo-inositol + phosphate. The enzyme catalyses 1D-myo-inositol 2-phosphate + H2O = myo-inositol + phosphate. The catalysed reaction is 1D-myo-inositol 3-phosphate + H2O = myo-inositol + phosphate. It carries out the reaction 1D-myo-inositol 4-phosphate + H2O = myo-inositol + phosphate. It catalyses the reaction 1D-myo-inositol 5-phosphate + H2O = myo-inositol + phosphate. The enzyme catalyses 1D-myo-inositol 6-phosphate + H2O = myo-inositol + phosphate. The catalysed reaction is scyllo-inositol 1-phosphate + H2O = scyllo-inositol + phosphate. It carries out the reaction alpha-D-galactose 1-phosphate + H2O = D-galactose + phosphate. It catalyses the reaction alpha-D-glucose 1-phosphate + H2O = D-glucose + phosphate. The enzyme catalyses D-glucose 6-phosphate + H2O = D-glucose + phosphate. The catalysed reaction is beta-D-fructose 1-phosphate + H2O = D-fructose + phosphate. It carries out the reaction glycerol 2-phosphate + H2O = glycerol + phosphate. It catalyses the reaction adenosine 2'-phosphate + H2O = adenosine + phosphate. The protein operates within polyol metabolism; myo-inositol biosynthesis; myo-inositol from D-glucose 6-phosphate: step 2/2. With respect to regulation, inhibited by Li(+), Ca(2+) and Mn(2+), but also by Mg(2+) at concentrations above 3 mM. In terms of biological role, phosphatase involved in the dephosphorylation of myo-inositol monophosphate to generate myo-inositol. Is also able to dephosphorylate scyllo-inositol-phosphate, myo-inositol 1,4-diphosphate, scyllo-inositol-1,3-diphosphate and scyllo-inositol-1,4-diphosphate. Also dephosphorylates in vitro other sugar-phosphates including D-galactose-1-phosphate, glucose-1-phosphate, glucose-6-phosphate, fructose-1-phosphate, beta-glycerophosphate and 2'-AMP. Responsible for the provision of inositol required for synthesis of phosphatidylinositol and polyphosphoinositides, and involved in maintaining normal brain function. Has been implicated as the pharmacological target for lithium Li(+) action in brain. This chain is Inositol monophosphatase 1 (impa1), found in Xenopus laevis (African clawed frog).